A 189-amino-acid polypeptide reads, in one-letter code: Elongation factor P (189 aa).

Belongs to the elongation factor P family.

The protein resides in the cytoplasm. It functions in the pathway protein biosynthesis; polypeptide chain elongation. Involved in peptide bond synthesis. Stimulates efficient translation and peptide-bond synthesis on native or reconstituted 70S ribosomes in vitro. Probably functions indirectly by altering the affinity of the ribosome for aminoacyl-tRNA, thus increasing their reactivity as acceptors for peptidyl transferase. This Rhizobium etli (strain CIAT 652) protein is Elongation factor P.